The chain runs to 231 residues: Enolase-phosphatase E1 (231 aa).

It belongs to the HAD-like hydrolase superfamily. MasA/MtnC family. Monomer. It depends on Mg(2+) as a cofactor.

It carries out the reaction 5-methylsulfanyl-2,3-dioxopentyl phosphate + H2O = 1,2-dihydroxy-5-(methylsulfanyl)pent-1-en-3-one + phosphate. The protein operates within amino-acid biosynthesis; L-methionine biosynthesis via salvage pathway; L-methionine from S-methyl-5-thio-alpha-D-ribose 1-phosphate: step 3/6. It functions in the pathway amino-acid biosynthesis; L-methionine biosynthesis via salvage pathway; L-methionine from S-methyl-5-thio-alpha-D-ribose 1-phosphate: step 4/6. Bifunctional enzyme that catalyzes the enolization of 2,3-diketo-5-methylthiopentyl-1-phosphate (DK-MTP-1-P) into the intermediate 2-hydroxy-3-keto-5-methylthiopentenyl-1-phosphate (HK-MTPenyl-1-P), which is then dephosphorylated to form the acireductone 1,2-dihydroxy-3-keto-5-methylthiopentene (DHK-MTPene). The protein is Enolase-phosphatase E1 of Granulibacter bethesdensis (strain ATCC BAA-1260 / CGDNIH1).